Reading from the N-terminus, the 58-residue chain is Amyloid-beta precursor protein (58 aa).

The Extracellular segment spans residues 1-34; it reads ISEVKMDAEFRHDSGYEVHHQKLVFFAEDVGSNK. Positions 12, 16, 19, and 20 each coordinate Cu(2+). Zn(2+)-binding residues include His12, Tyr16, His19, and His20. Residues 35–58 form a helical membrane-spanning segment; the sequence is GAIIGLMVGGVVIATVIVITLVML.

The protein belongs to the APP family. Binds, via its C-terminus, to the PID domain of several cytoplasmic proteins, including APBB family members, the APBA family, MAPK8IP1, SHC1 and NUMB and DAB1. Binding to DAB1 inhibits its serine phosphorylation. Interacts (via NPXY motif) with DAB2 (via PID domain); the interaction is impaired by tyrosine phosphorylation of the NPXY motif. Also interacts with GPCR-like protein BPP, APPBP1, IB1, KNS2 (via its TPR domains), APPBP2 (via BaSS) and DDB1. In vitro, it binds MAPT via the MT-binding domains. Associates with microtubules in the presence of ATP and in a kinesin-dependent manner. Interacts, through a C-terminal domain, with GNAO1. Interacts with CPEB1, ANKS1B and AGER. Interacts with ITM2B. Interacts with ITM2C. Interacts with IDE. Can form homodimers; dimerization is enhanced in the presence of Cu(2+) ions. Can form homodimers; this is promoted by heparin binding. Interacts with SORL1 (via N-terminal ectodomain); this interaction retains APP in the trans-Golgi network and reduces processing into soluble APP-alpha and amyloid-beta peptides. Interacts with PLD3. Interacts with VDAC1. Interacts with NSG1; could regulate APP processing. Amyloid-beta protein 42 interacts with FPR2. Interacts with LRRK2. Interacts (via cytoplasmic domain) with KIF5B. Interacts (via C-terminus) with APBB2/FE65L1 (via C-terminus). Interacts (via intracellular domain) with APBB3. In terms of processing, proteolytically processed under normal cellular conditions. Cleavage either by alpha-secretase, beta-secretase or theta-secretase leads to generation and extracellular release of soluble APP peptides, S-APP-alpha and S-APP-beta, and the retention of corresponding membrane-anchored C-terminal fragments, C80, C83 and C99. Subsequent processing of C80 and C83 by gamma-secretase yields P3 peptides. This is the major secretory pathway and is non-amyloidogenic. Alternatively, presenilin/nicastrin-mediated gamma-secretase processing of C99 releases the amyloid-beta proteins, amyloid-beta protein 40 and amyloid-beta protein 42, major components of amyloid plaques, and the cytotoxic C-terminal fragments, gamma-CTF(50), gamma-CTF(57) and gamma-CTF(59). PSEN1 cleavage is more efficient with C83 than with C99 as substrate (in vitro). Amyloid-beta protein 40 and Amyloid-beta protein 42 are cleaved by ACE. Many other minor amyloid-beta peptides, amyloid-beta 1-X peptides, are found in cerebral spinal fluid (CSF) including the amyloid-beta X-15 peptides, produced from the cleavage by alpha-secretase.

The protein localises to the cell membrane. The protein resides in the membrane. Its subcellular location is the perikaryon. It is found in the cell projection. It localises to the growth cone. The protein localises to the clathrin-coated pit. The protein resides in the early endosome. Its subcellular location is the cytoplasmic vesicle. It is found in the secreted. It localises to the cell surface. The protein localises to the nucleus. The protein resides in the cytoplasm. Functions as a cell surface receptor and performs physiological functions on the surface of neurons relevant to neurite growth, neuronal adhesion and axonogenesis. Interaction between APP molecules on neighboring cells promotes synaptogenesis. Involved in cell mobility and transcription regulation through protein-protein interactions. Can promote transcription activation through binding to APBB1-KAT5 and inhibit Notch signaling through interaction with Numb. Couples to apoptosis-inducing pathways such as those mediated by G(o) and JIP. Inhibits G(o)-alpha ATPase activity. Acts as a kinesin I membrane receptor, mediating the axonal transport of beta-secretase and presenilin 1. By acting as a kinesin I membrane receptor, plays a role in axonal anterograde transport of cargo towards synapses in axons. May be involved in copper homeostasis/oxidative stress through copper ion reduction. In vitro, copper-metallated APP induces neuronal death directly or is potentiated through Cu(2+)-mediated low-density lipoprotein oxidation. Can regulate neurite outgrowth through binding to components of the extracellular matrix such as heparin and collagen I and IV. Induces a AGER-dependent pathway that involves activation of p38 MAPK, resulting in internalization of amyloid-beta peptide and mitochondrial dysfunction in cultured cortical neurons. Provides Cu(2+) ions for GPC1 which are required for release of nitric oxide (NO) and subsequent degradation of the heparan sulfate chains on GPC1. This is Amyloid-beta precursor protein (APP) from Canis lupus familiaris (Dog).